The chain runs to 340 residues: Guanine nucleotide-binding protein G(I)/G(S)/G(T) subunit beta-3 (340 aa).

7 WD repeats span residues 53–83, 95–125, 141–170, 182–212, 224–254, 268–298, and 310–340; these read GHLA…IVWD, LRSS…SIYS, AHTG…ALWD, GHTG…KLWD, GHES…RLFD, SIIC…NIWD, and GHDN…KVWN.

The protein belongs to the WD repeat G protein beta family. As to quaternary structure, g proteins are composed of 3 units, alpha, beta and gamma. Interacts with RASD2.

It localises to the cytoplasm. The protein resides in the perinuclear region. Functionally, guanine nucleotide-binding proteins (G proteins) are involved as a modulator or transducer in various transmembrane signaling systems. The beta and gamma chains are required for the GTPase activity, for replacement of GDP by GTP, and for G protein-effector interaction. The sequence is that of Guanine nucleotide-binding protein G(I)/G(S)/G(T) subunit beta-3 (GNB3) from Canis lupus familiaris (Dog).